Here is a 407-residue protein sequence, read N- to C-terminus: Argininosuccinate synthase (407 aa).

10 to 18 (AYSGGLDTS) lines the ATP pocket. Tyrosine 88 and serine 93 together coordinate L-citrulline. Glycine 118 contacts ATP. Residues threonine 120, asparagine 124, and aspartate 125 each contribute to the L-aspartate site. Asparagine 124 lines the L-citrulline pocket. 5 residues coordinate L-citrulline: arginine 128, serine 177, serine 186, glutamate 263, and tyrosine 275.

This sequence belongs to the argininosuccinate synthase family. Type 1 subfamily. In terms of assembly, homotetramer.

Its subcellular location is the cytoplasm. The catalysed reaction is L-citrulline + L-aspartate + ATP = 2-(N(omega)-L-arginino)succinate + AMP + diphosphate + H(+). Its pathway is amino-acid biosynthesis; L-arginine biosynthesis; L-arginine from L-ornithine and carbamoyl phosphate: step 2/3. This is Argininosuccinate synthase from Clostridium botulinum (strain Alaska E43 / Type E3).